The chain runs to 502 residues: MTEKKYIVALDQGTTSSRAVVMDHDANIISVSQREFEQIYPKPGWVEHDPMEIWATQSSTLVEVLAKADISSDQIAAIGITNQRETTIVWEKETGKPIYNAIVWQCRRTAEICEHLKRDGMEEYIRNNTGLVIDPYFSGTKVKWILDHVEGSRERAKRGELLFGTVDTWLIWKMTQGRVHVTDYTNASRTMLFNIHTLDWDDKMLEVLDIPREMLPEVRRSSEVYGQTNIGGKGGTRIPISGIAGDQQAALFGQLCVKEGMAKNTYGTGCFMLMNTGEKAVKSENGLLTTIACGPTGEVNYALEGAVFMAGASIQWLRDEMKLINDAYDSEYFATKVQNTNGVYVVPAFTGLGAPYWDPYARGAIFGLTRGVNANHIIRATLESIAYQTRDVLEAMQADSGIRLHALRVDGGAVANNFLMQFQSDILGTRVERPEVREVTALGAAYLAGLAVGFWQNLDELQEKAVIEREFRPGIETTERNYRYAGWKKAVKRAMAWEEHDE.

ADP is bound at residue Thr-14. The ATP site is built by Thr-14, Thr-15, and Ser-16. Residue Thr-14 participates in sn-glycerol 3-phosphate binding. Arg-18 is a binding site for ADP. Sn-glycerol 3-phosphate is bound by residues Arg-84, Glu-85, Tyr-136, and Asp-246. 5 residues coordinate glycerol: Arg-84, Glu-85, Tyr-136, Asp-246, and Gln-247. ADP contacts are provided by Thr-268 and Gly-311. ATP contacts are provided by Thr-268, Gly-311, Gln-315, and Gly-412. Positions 412 and 416 each coordinate ADP.

Belongs to the FGGY kinase family. In terms of assembly, homotetramer and homodimer (in equilibrium). Heterodimer with EIIA-Glc. Binds 1 zinc ion per glycerol kinase EIIA-Glc dimer. The zinc ion is important for dimerization.

The enzyme catalyses glycerol + ATP = sn-glycerol 3-phosphate + ADP + H(+). It participates in polyol metabolism; glycerol degradation via glycerol kinase pathway; sn-glycerol 3-phosphate from glycerol: step 1/1. With respect to regulation, activity of this regulatory enzyme is affected by several metabolites. Allosterically and non-competitively inhibited by fructose 1,6-bisphosphate (FBP) and unphosphorylated phosphocarrier protein EIIA-Glc (III-Glc), an integral component of the bacterial phosphotransferase (PTS) system. Its function is as follows. Key enzyme in the regulation of glycerol uptake and metabolism. Catalyzes the phosphorylation of glycerol to yield sn-glycerol 3-phosphate. The polypeptide is Glycerol kinase (Escherichia fergusonii (strain ATCC 35469 / DSM 13698 / CCUG 18766 / IAM 14443 / JCM 21226 / LMG 7866 / NBRC 102419 / NCTC 12128 / CDC 0568-73)).